Here is an 813-residue protein sequence, read N- to C-terminus: Calpain-7 (813 aa).

The residue at position 1 (Met-1) is an N-acetylmethionine. The residue at position 95 (Thr-95) is a Phosphothreonine. The Calpain catalytic domain occupies 232-540 (RERFAYPMPF…YDVVYLSWNP (309 aa)). Active-site residues include Cys-290, His-458, and Asn-478. A domain III region spans residues 541–701 (ALFKESTCIH…INGKWSGQSA (161 aa)). The segment at 702-813 (GGCGNFQETH…TVPIKTTQLQ (112 aa)) is domain N.

It belongs to the peptidase C2 family. Ubiquitous.

It is found in the nucleus. In terms of biological role, calcium-regulated non-lysosomal thiol-protease. The sequence is that of Calpain-7 (Capn7) from Mus musculus (Mouse).